The chain runs to 303 residues: Recombination-associated protein RdgC (303 aa).

Belongs to the RdgC family.

Its subcellular location is the cytoplasm. The protein localises to the nucleoid. Its function is as follows. May be involved in recombination. This is Recombination-associated protein RdgC from Aeromonas hydrophila subsp. hydrophila (strain ATCC 7966 / DSM 30187 / BCRC 13018 / CCUG 14551 / JCM 1027 / KCTC 2358 / NCIMB 9240 / NCTC 8049).